The chain runs to 474 residues: Trehalose-6-phosphate synthase (474 aa).

Arg10 is a D-glucose 6-phosphate binding site. 22–23 (GG) is a UDP-alpha-D-glucose binding site. D-glucose 6-phosphate is bound by residues Tyr77 and Asp131. UDP-alpha-D-glucose is bound by residues Arg263 and Lys268. Arg301 contributes to the D-glucose 6-phosphate binding site. UDP-alpha-D-glucose-binding positions include Phe340 and 366-370 (LVAKE).

This sequence belongs to the glycosyltransferase 20 family. In terms of assembly, homotetramer.

It catalyses the reaction D-glucose 6-phosphate + UDP-alpha-D-glucose = alpha,alpha-trehalose 6-phosphate + UDP + H(+). It participates in glycan biosynthesis; trehalose biosynthesis. Probably involved in the osmoprotection via the biosynthesis of trehalose. Catalyzes the transfer of glucose from UDP-alpha-D-glucose (UDP-Glc) to D-glucose 6-phosphate (Glc-6-P) to form trehalose-6-phosphate. Acts with retention of the anomeric configuration of the UDP-sugar donor. This chain is Trehalose-6-phosphate synthase, found in Klebsiella pneumoniae subsp. pneumoniae (strain ATCC 700721 / MGH 78578).